The primary structure comprises 198 residues: Glycerol-3-phosphate acyltransferase 2 (198 aa).

4 consecutive transmembrane segments (helical) span residues 4 to 24, 71 to 91, 113 to 133, and 147 to 167; these read TYLL…LVVG, LPMV…AVLG, LLCY…TLLF, and VVAV…AMCL.

Belongs to the PlsY family. In terms of assembly, probably interacts with PlsX.

It is found in the cell membrane. The enzyme catalyses an acyl phosphate + sn-glycerol 3-phosphate = a 1-acyl-sn-glycero-3-phosphate + phosphate. It participates in lipid metabolism; phospholipid metabolism. Catalyzes the transfer of an acyl group from acyl-phosphate (acyl-PO(4)) to glycerol-3-phosphate (G3P) to form lysophosphatidic acid (LPA). This enzyme utilizes acyl-phosphate as fatty acyl donor, but not acyl-CoA or acyl-ACP. The sequence is that of Glycerol-3-phosphate acyltransferase 2 from Bacillus cereus (strain ZK / E33L).